The sequence spans 700 residues: Inhibitor of carbonic anhydrase (700 aa).

The signal sequence occupies residues 1–19 (MRLLICALLCLGTLGLCLA). 2 consecutive Transferrin-like domains span residues 25–347 (IRWC…NLKR) and 355–685 (VKWC…NFRQ). Disulfide bonds link Cys28/Cys67, Cys38/Cys58, Cys137/Cys213, Cys172/Cys188, Cys175/Cys198, Cys185/Cys196, Cys246/Cys260, Cys358/Cys390, Cys368/Cys381, Cys415/Cys695, Cys438/Cys658, Cys470/Cys545, Cys494/Cys686, Cys504/Cys518, Cys515/Cys528, and Cys585/Cys599. N-linked (GlcNAc...) asparagine glycosylation is present at Asn664.

This sequence belongs to the transferrin family. As to quaternary structure, monomer. Interacts (via transferrin-like domain 2) with CA2. Post-translationally, N-glycosylated. Detected in blood plasma, heart, kidney, liver, colon, lung, spleen, pancreas and testis (at protein level).

It is found in the secreted. Its function is as follows. Inhibitor for carbonic anhydrase 2 (CA2). Does not bind iron ions. The chain is Inhibitor of carbonic anhydrase from Mus musculus (Mouse).